A 154-amino-acid chain; its full sequence is Superoxide dismutase [Cu-Zn] (154 aa).

His-47, His-49, and His-64 together coordinate Cu cation. A disulfide bridge connects residues Cys-58 and Cys-147. Zn(2+) is bound by residues His-64, His-72, His-81, and Asp-84. His-121 contributes to the Cu cation binding site.

This sequence belongs to the Cu-Zn superoxide dismutase family. In terms of assembly, homodimer. The cofactor is Cu cation. Zn(2+) serves as cofactor.

The protein resides in the cytoplasm. It carries out the reaction 2 superoxide + 2 H(+) = H2O2 + O2. In terms of biological role, destroys radicals which are normally produced within the cells and which are toxic to biological systems. The sequence is that of Superoxide dismutase [Cu-Zn] (SODCC) from Pinus sylvestris (Scotch pine).